The primary structure comprises 265 residues: Protein N-terminal and lysine N-methyltransferase EFM7 (265 aa).

The interval 1 to 25 is disordered; it reads MSSDHEEDSLYGATELFGEPDGFYE. S-adenosyl-L-methionine contacts are provided by residues Trp-67, 93 to 95, Asp-115, Trp-152, and Ser-176; that span reads GAA.

It belongs to the class I-like SAM-binding methyltransferase superfamily. EFM7 family.

It is found in the cytoplasm. S-adenosyl-L-methionine-dependent protein methyltransferase that trimethylates the N-terminal glycine 'Gly-2' of elongation factor 1-alpha, before also catalyzing the mono- and dimethylation of 'Lys-3'. The polypeptide is Protein N-terminal and lysine N-methyltransferase EFM7 (Eremothecium gossypii (strain ATCC 10895 / CBS 109.51 / FGSC 9923 / NRRL Y-1056) (Yeast)).